A 595-amino-acid chain; its full sequence is Proline--tRNA ligase (595 aa).

The tract at residues 1-22 (MKMSTMFGATLHTAPGRSESEG) is disordered.

It belongs to the class-II aminoacyl-tRNA synthetase family. ProS type 1 subfamily. Homodimer.

It is found in the cytoplasm. The enzyme catalyses tRNA(Pro) + L-proline + ATP = L-prolyl-tRNA(Pro) + AMP + diphosphate. Its function is as follows. Catalyzes the attachment of proline to tRNA(Pro) in a two-step reaction: proline is first activated by ATP to form Pro-AMP and then transferred to the acceptor end of tRNA(Pro). As ProRS can inadvertently accommodate and process non-cognate amino acids such as alanine and cysteine, to avoid such errors it has two additional distinct editing activities against alanine. One activity is designated as 'pretransfer' editing and involves the tRNA(Pro)-independent hydrolysis of activated Ala-AMP. The other activity is designated 'posttransfer' editing and involves deacylation of mischarged Ala-tRNA(Pro). The misacylated Cys-tRNA(Pro) is not edited by ProRS. The protein is Proline--tRNA ligase of Salinispora tropica (strain ATCC BAA-916 / DSM 44818 / JCM 13857 / NBRC 105044 / CNB-440).